The primary structure comprises 650 residues: PTS system mannose-specific EIIBCA component (650 aa).

The region spanning 1–98 (MKLLAITSCP…PEELIQKALN (98 aa)) is the PTS EIIB type-2 domain. The active-site Phosphocysteine intermediate; for EIIB activity is Cys9. The 334-residue stretch at 123–456 (IYRHLMNGVS…SLVTALFVNV (334 aa)) folds into the PTS EIIC type-2 domain. The next 7 helical transmembrane spans lie at 133-153 (FMVP…TLGG), 174-194 (IGSA…AYSI), 199-219 (GLVP…YDSA), 221-241 (GAGF…ALWI), 256-276 (IIII…FLIG), 297-317 (SSIL…GGPV), and 336-356 (IMGP…IATF). Ser365 bears the Phosphoserine mark. 3 helical membrane passes run 369–389 (MGKA…IPFA), 396–416 (VIPS…IGNV), and 436–456 (VLMF…FVNV). Residues 504 to 649 (DIISPELIEP…EEAYKLLEEI (146 aa)) form the PTS EIIA type-2 domain. Residue His566 is the Tele-phosphohistidine intermediate; for EIIA activity of the active site.

It is found in the cell membrane. It carries out the reaction D-mannose(out) + N(pros)-phospho-L-histidyl-[protein] = D-mannose 6-phosphate(in) + L-histidyl-[protein]. Its function is as follows. The phosphoenolpyruvate-dependent sugar phosphotransferase system (sugar PTS), a major carbohydrate active -transport system, catalyzes the phosphorylation of incoming sugar substrates concomitantly with their translocation across the cell membrane. This system is involved in mannose transport. The protein is PTS system mannose-specific EIIBCA component (manP) of Bacillus subtilis (strain 168).